A 349-amino-acid polypeptide reads, in one-letter code: Cobalt-precorrin-5B C(1)-methyltransferase (349 aa).

The protein belongs to the CbiD family.

It carries out the reaction Co-precorrin-5B + S-adenosyl-L-methionine = Co-precorrin-6A + S-adenosyl-L-homocysteine. It participates in cofactor biosynthesis; adenosylcobalamin biosynthesis; cob(II)yrinate a,c-diamide from sirohydrochlorin (anaerobic route): step 6/10. Catalyzes the methylation of C-1 in cobalt-precorrin-5B to form cobalt-precorrin-6A. In Saccharolobus solfataricus (strain ATCC 35092 / DSM 1617 / JCM 11322 / P2) (Sulfolobus solfataricus), this protein is Cobalt-precorrin-5B C(1)-methyltransferase.